A 429-amino-acid polypeptide reads, in one-letter code: Phosphomethylpyrimidine synthase (429 aa).

Substrate contacts are provided by residues Asn66, Met95, Tyr124, His163, 185 to 187 (SRG), 226 to 229 (DGLR), and Glu265. His269 is a binding site for Zn(2+). Tyr292 is a substrate binding site. Residue His333 participates in Zn(2+) binding. Cys407, Cys410, and Cys414 together coordinate [4Fe-4S] cluster.

The protein belongs to the ThiC family. The cofactor is [4Fe-4S] cluster.

The enzyme catalyses 5-amino-1-(5-phospho-beta-D-ribosyl)imidazole + S-adenosyl-L-methionine = 4-amino-2-methyl-5-(phosphooxymethyl)pyrimidine + CO + 5'-deoxyadenosine + formate + L-methionine + 3 H(+). Its pathway is cofactor biosynthesis; thiamine diphosphate biosynthesis. Catalyzes the synthesis of the hydroxymethylpyrimidine phosphate (HMP-P) moiety of thiamine from aminoimidazole ribotide (AIR) in a radical S-adenosyl-L-methionine (SAM)-dependent reaction. The protein is Phosphomethylpyrimidine synthase of Pyrococcus abyssi (strain GE5 / Orsay).